Here is a 439-residue protein sequence, read N- to C-terminus: Glutamine synthetase (439 aa).

One can recognise a GS beta-grasp domain in the interval 12-93; the sequence is RSPKFVQLIF…VYGYIYKDGK (82 aa). One can recognise a GS catalytic domain in the interval 99-439; the sequence is PRGVLKRVIE…EWELERYFFI (341 aa). Positions 122 and 124 each coordinate Mg(2+). E172 is an ATP binding site. The Mg(2+) site is built by E177 and E184. G229 is an L-glutamate binding site. H233 lines the Mg(2+) pocket. ATP is bound by residues 235–237 and S237; that span reads HIS. L-glutamate contacts are provided by R283, E289, and R301. The ATP site is built by R301 and R306. E318 is a binding site for Mg(2+). Residue R320 participates in L-glutamate binding.

It belongs to the glutamine synthetase family. As to quaternary structure, oligomer of 12 subunits arranged in the form of two hexagons. Mg(2+) serves as cofactor.

It localises to the cytoplasm. It carries out the reaction L-glutamate + NH4(+) + ATP = L-glutamine + ADP + phosphate + H(+). Its function is as follows. Probably involved in nitrogen metabolism via ammonium assimilation. Catalyzes the ATP-dependent biosynthesis of glutamine from glutamate and ammonia. The sequence is that of Glutamine synthetase from Pyrococcus abyssi (strain GE5 / Orsay).